The sequence spans 276 residues: NH(3)-dependent NAD(+) synthetase (276 aa).

Position 43–50 (43–50) interacts with ATP; the sequence is GISGGVDS. Asp-49 contributes to the Mg(2+) binding site. Arg-146 serves as a coordination point for deamido-NAD(+). Thr-166 contacts ATP. A Mg(2+)-binding site is contributed by Glu-171. Residues Lys-179 and Asp-186 each coordinate deamido-NAD(+). 2 residues coordinate ATP: Lys-195 and Thr-217. Residue 266–267 coordinates deamido-NAD(+); that stretch reads HK.

This sequence belongs to the NAD synthetase family. Homodimer.

The catalysed reaction is deamido-NAD(+) + NH4(+) + ATP = AMP + diphosphate + NAD(+) + H(+). It functions in the pathway cofactor biosynthesis; NAD(+) biosynthesis; NAD(+) from deamido-NAD(+) (ammonia route): step 1/1. Catalyzes the ATP-dependent amidation of deamido-NAD to form NAD. Uses ammonia as a nitrogen source. The protein is NH(3)-dependent NAD(+) synthetase of Shewanella frigidimarina (strain NCIMB 400).